The primary structure comprises 492 residues: G protein-activated inward rectifier potassium channel 1 (492 aa).

Residues 1-72 (MSALRRKLGD…LFTTLVDLKW (72 aa)) lie on the Cytoplasmic side of the membrane. Residues 16-35 (STSASGGGLPPPRAAPRGKR) form a disordered region. The chain crosses the membrane as a helical span at residues 73-97 (RWNLFIFVLTYTVAWLFMASMWWVI). Over 98 to 121 (AYMRGDLNKAHDDSYTPCVANVYN) the chain is Extracellular. Residues 122-133 (FPSAFLFFIETE) constitute an intramembrane region (helical; Pore-forming). The pore-forming intramembrane region spans 134 to 140 (ATIGYGY). Residues 135–140 (TIGYGY) carry the Selectivity filter motif. Topologically, residues 141-149 (RYITDKCPE) are extracellular. Residues 150–171 (GIILFLFQSILGSIVDAFLIGC) form a helical membrane-spanning segment. Over 172–492 (MFIKMSQPKK…LRKMNSDRFT (321 aa)) the chain is Cytoplasmic. The segment at 174-201 (IKMSQPKKRAETLMFSEHAAISMRDGKL) is polyphosphoinositide (PIP2)-binding. Residues 452–492 (SDPMSQSVADLPPKLQKLSGGGRMEGNLPPKLRKMNSDRFT) are disordered.

Belongs to the inward rectifier-type potassium channel (TC 1.A.2.1) family. KCNJ3 subfamily. As to quaternary structure, associates with KCNJ5/GIRK4 or KCNJ6/GIRK2 or KCNJ9/GIRK3 to form a G-protein activated heteromultimer pore-forming unit. The resulting inward current is much larger.

It is found in the membrane. It catalyses the reaction K(+)(in) = K(+)(out). Its activity is regulated as follows. Heteromultimer composed of KCNJ3/GIRK1 and KCNJ5/GIRK4 is activated by phosphatidylinositol 4,5 biphosphate (PtdIns(4,5)P2). Its function is as follows. Inward rectifier potassium channels are characterized by a greater tendency to allow potassium to flow into the cell rather than out of it. Their voltage dependence is regulated by the concentration of extracellular potassium; as external potassium is raised, the voltage range of the channel opening shifts to more positive voltages. The inward rectification is mainly due to the blockage of outward current by internal magnesium. This potassium channel is controlled by G proteins. This receptor plays a crucial role in regulating the heartbeat. This chain is G protein-activated inward rectifier potassium channel 1 (KCNJ3), found in Gallus gallus (Chicken).